Reading from the N-terminus, the 442-residue chain is tRNA-2-methylthio-N(6)-dimethylallyladenosine synthase (442 aa).

The MTTase N-terminal domain occupies 2-117; it reads KSLYIKTYGC…LPELIVKASR (116 aa). [4Fe-4S] cluster contacts are provided by cysteine 11, cysteine 47, cysteine 80, cysteine 157, cysteine 161, and cysteine 164. The Radical SAM core domain occupies 143-374; that stretch reads NSQGSSAFLS…QKLINKQQLE (232 aa). The TRAM domain occupies 377–441; the sequence is QSMVGKTIPV…QNSLLGRELQ (65 aa).

This sequence belongs to the methylthiotransferase family. MiaB subfamily. Monomer. [4Fe-4S] cluster serves as cofactor.

It localises to the cytoplasm. It catalyses the reaction N(6)-dimethylallyladenosine(37) in tRNA + (sulfur carrier)-SH + AH2 + 2 S-adenosyl-L-methionine = 2-methylsulfanyl-N(6)-dimethylallyladenosine(37) in tRNA + (sulfur carrier)-H + 5'-deoxyadenosine + L-methionine + A + S-adenosyl-L-homocysteine + 2 H(+). Catalyzes the methylthiolation of N6-(dimethylallyl)adenosine (i(6)A), leading to the formation of 2-methylthio-N6-(dimethylallyl)adenosine (ms(2)i(6)A) at position 37 in tRNAs that read codons beginning with uridine. In Wolbachia sp. subsp. Brugia malayi (strain TRS), this protein is tRNA-2-methylthio-N(6)-dimethylallyladenosine synthase.